The chain runs to 147 residues: Globin, polymeric component P3 (147 aa).

A Globin domain is found at 2–146 (HLTADQVAAL…ISDALIAGLE (145 aa)). Position 96 (histidine 96) interacts with heme b.

The protein belongs to the globin family. As to quaternary structure, polymer.

This chain is Globin, polymeric component P3, found in Glycera dibranchiata (Bloodworm).